The sequence spans 279 residues: Urease accessory protein UreD (279 aa).

Belongs to the UreD family. UreD, UreF and UreG form a complex that acts as a GTP-hydrolysis-dependent molecular chaperone, activating the urease apoprotein by helping to assemble the nickel containing metallocenter of UreC. The UreE protein probably delivers the nickel.

Its subcellular location is the cytoplasm. Its function is as follows. Required for maturation of urease via the functional incorporation of the urease nickel metallocenter. This Nostoc sp. (strain PCC 7120 / SAG 25.82 / UTEX 2576) protein is Urease accessory protein UreD.